A 609-amino-acid chain; its full sequence is Glutamine--fructose-6-phosphate aminotransferase [isomerizing] (609 aa).

The Nucleophile; for GATase activity role is filled by Cys2. One can recognise a Glutamine amidotransferase type-2 domain in the interval 2 to 218 (CGIVGAIAQR…EGDIAEITRR (217 aa)). SIS domains lie at 286–426 (ADEL…LKGL) and 458–599 (LAED…VDQP). Catalysis depends on Lys604, which acts as the For Fru-6P isomerization activity.

As to quaternary structure, homodimer.

It localises to the cytoplasm. It catalyses the reaction D-fructose 6-phosphate + L-glutamine = D-glucosamine 6-phosphate + L-glutamate. In terms of biological role, catalyzes the first step in hexosamine metabolism, converting fructose-6P into glucosamine-6P using glutamine as a nitrogen source. The sequence is that of Glutamine--fructose-6-phosphate aminotransferase [isomerizing] from Salmonella paratyphi A (strain ATCC 9150 / SARB42).